The chain runs to 202 residues: Hydrogenase expression/formation protein HupD (202 aa).

Residues Glu-28, Asp-74, and His-105 each coordinate Ni(2+).

The protein belongs to the peptidase A31 family.

Functionally, not known. Could be involved in the processing of hydrogenase. This is Hydrogenase expression/formation protein HupD (hupD) from Rhizobium leguminosarum bv. viciae.